Here is a 255-residue protein sequence, read N- to C-terminus: Tryptophan synthase alpha chain (255 aa).

Residues Glu-44 and Asp-55 each act as proton acceptor in the active site.

The protein belongs to the TrpA family. Tetramer of two alpha and two beta chains.

It carries out the reaction (1S,2R)-1-C-(indol-3-yl)glycerol 3-phosphate + L-serine = D-glyceraldehyde 3-phosphate + L-tryptophan + H2O. It functions in the pathway amino-acid biosynthesis; L-tryptophan biosynthesis; L-tryptophan from chorismate: step 5/5. Its function is as follows. The alpha subunit is responsible for the aldol cleavage of indoleglycerol phosphate to indole and glyceraldehyde 3-phosphate. This is Tryptophan synthase alpha chain from Dehalococcoides mccartyi (strain ATCC BAA-2100 / JCM 16839 / KCTC 5957 / BAV1).